We begin with the raw amino-acid sequence, 354 residues long: 3-isopropylmalate dehydrogenase (354 aa).

G76–E87 provides a ligand contact to NAD(+). Residues R94, R104, R130, and D215 each contribute to the substrate site. The Mg(2+) site is built by D215, D239, and D243. Position 273 to 285 (G273 to N285) interacts with NAD(+).

This sequence belongs to the isocitrate and isopropylmalate dehydrogenases family. LeuB type 1 subfamily. Homodimer. The cofactor is Mg(2+). Requires Mn(2+) as cofactor.

It localises to the cytoplasm. The catalysed reaction is (2R,3S)-3-isopropylmalate + NAD(+) = 4-methyl-2-oxopentanoate + CO2 + NADH. The protein operates within amino-acid biosynthesis; L-leucine biosynthesis; L-leucine from 3-methyl-2-oxobutanoate: step 3/4. Catalyzes the oxidation of 3-carboxy-2-hydroxy-4-methylpentanoate (3-isopropylmalate) to 3-carboxy-4-methyl-2-oxopentanoate. The product decarboxylates to 4-methyl-2 oxopentanoate. This is 3-isopropylmalate dehydrogenase from Bacillus cereus (strain ATCC 10987 / NRS 248).